Reading from the N-terminus, the 382-residue chain is 3-dehydroquinate synthase (382 aa).

NAD(+)-binding positions include 81–86 (EGEISK), 115–119 (GVVGD), 139–140 (TS), K152, and K161. Positions 194, 256, and 274 each coordinate Zn(2+).

The protein belongs to the sugar phosphate cyclases superfamily. Dehydroquinate synthase family. NAD(+) is required as a cofactor. The cofactor is Co(2+). Zn(2+) serves as cofactor.

Its subcellular location is the cytoplasm. It carries out the reaction 7-phospho-2-dehydro-3-deoxy-D-arabino-heptonate = 3-dehydroquinate + phosphate. It participates in metabolic intermediate biosynthesis; chorismate biosynthesis; chorismate from D-erythrose 4-phosphate and phosphoenolpyruvate: step 2/7. Its function is as follows. Catalyzes the conversion of 3-deoxy-D-arabino-heptulosonate 7-phosphate (DAHP) to dehydroquinate (DHQ). This is 3-dehydroquinate synthase from Bradyrhizobium diazoefficiens (strain JCM 10833 / BCRC 13528 / IAM 13628 / NBRC 14792 / USDA 110).